The primary structure comprises 353 residues: MPLQNDRLLRALARQPVDRTPVWMMRQAGRYLPEYRETRGQAGSFMDLCRNAELACEVTMQPLRRYALDAAILFSDILTIPDAMDLGLYFETGEGPKFRKTVRSAEAVDALPVPDAERDLDYVMNAVRTIRHELADSVPLIGFSGSPWTLATYMIEGGSSKDFRHAKALMYGDPAAMHALLDKLARSVTDYLNAQIRAGAQIVQIFDTWGGVLSTPAYREFSLAYMARIVEGLIREHEGRHVPVILFTKQGGQWLETIADSGADAVGLDWTTELSDARARVGDRVALQGNLDPNVLFASPQAIRDEVARILASYGSGPGHVFNLGHGVSQFTDPDHVAAFIEALHELSPRYHG.

Residues R26–R30, D76, Y153, T208, and H326 contribute to the substrate site.

Belongs to the uroporphyrinogen decarboxylase family. In terms of assembly, homodimer.

The protein localises to the cytoplasm. The enzyme catalyses uroporphyrinogen III + 4 H(+) = coproporphyrinogen III + 4 CO2. It participates in porphyrin-containing compound metabolism; protoporphyrin-IX biosynthesis; coproporphyrinogen-III from 5-aminolevulinate: step 4/4. Functionally, catalyzes the decarboxylation of four acetate groups of uroporphyrinogen-III to yield coproporphyrinogen-III. The sequence is that of Uroporphyrinogen decarboxylase from Chromohalobacter salexigens (strain ATCC BAA-138 / DSM 3043 / CIP 106854 / NCIMB 13768 / 1H11).